The primary structure comprises 110 residues: UPF0122 protein SH1678 (110 aa).

Belongs to the UPF0122 family.

Functionally, might take part in the signal recognition particle (SRP) pathway. This is inferred from the conservation of its genetic proximity to ftsY/ffh. May be a regulatory protein. The protein is UPF0122 protein SH1678 of Staphylococcus haemolyticus (strain JCSC1435).